Here is a 23-residue protein sequence, read N- to C-terminus: Benzaldehyde dehydrogenase [NAD(+)] I (23 aa).

This sequence belongs to the aldehyde dehydrogenase family. In terms of assembly, homotetramer.

The enzyme catalyses benzaldehyde + NAD(+) + H2O = benzoate + NADH + 2 H(+). In Acinetobacter guillouiae (Acinetobacter genomosp. 11), this protein is Benzaldehyde dehydrogenase [NAD(+)] I.